Reading from the N-terminus, the 485-residue chain is Trigger factor (485 aa).

The region spanning 169–261 (GDVAIVDFVG…LKELKEKELP (93 aa)) is the PPIase FKBP-type domain.

The protein belongs to the FKBP-type PPIase family. Tig subfamily.

It is found in the cytoplasm. It catalyses the reaction [protein]-peptidylproline (omega=180) = [protein]-peptidylproline (omega=0). In terms of biological role, involved in protein export. Acts as a chaperone by maintaining the newly synthesized protein in an open conformation. Functions as a peptidyl-prolyl cis-trans isomerase. The chain is Trigger factor from Trichodesmium erythraeum (strain IMS101).